Consider the following 137-residue polypeptide: 2-iminobutanoate/2-iminopropanoate deaminase (137 aa).

Serine 2 is modified (N-acetylserine). N6-succinyllysine occurs at positions 13, 60, and 67. Threonine 74 carries the phosphothreonine modification.

It belongs to the RutC family. In terms of assembly, homotrimer. Interacts with YTHDF2. Liver and kidney.

The protein resides in the cytoplasm. It localises to the nucleus. It is found in the peroxisome. Its subcellular location is the mitochondrion. The enzyme catalyses 2-iminobutanoate + H2O = 2-oxobutanoate + NH4(+). The catalysed reaction is 2-iminopropanoate + H2O = pyruvate + NH4(+). Catalyzes the hydrolytic deamination of enamine/imine intermediates that form during the course of normal metabolism. May facilitate the release of ammonia from these potentially toxic reactive metabolites, reducing their impact on cellular components. It may act on enamine/imine intermediates formed by several types of pyridoxal-5'-phosphate-dependent dehydratases including L-threonine dehydratase. Functionally, also promotes endoribonucleolytic cleavage of some transcripts by promoting recruitment of the ribonuclease P/MRP complex. Acts by bridging YTHDF2 and the ribonuclease P/MRP complex. RIDA/HRSP12 binds to N6-methyladenosine (m6A)-containing mRNAs containing a 5'-GGUUC-3' motif: cooperative binding of RIDA/HRSP12 and YTHDF2 to such transcripts lead to recruitment of the ribonuclease P/MRP complex and subsequent endoribonucleolytic cleavage. The protein is 2-iminobutanoate/2-iminopropanoate deaminase of Rattus norvegicus (Rat).